Consider the following 408-residue polypeptide: Aminopeptidase T (408 aa).

Positions 250, 316, 340, 345, 376, and 378 each coordinate a divalent metal cation.

This sequence belongs to the peptidase M29 family. In terms of assembly, homodimer. Co(2+) is required as a cofactor. It depends on Zn(2+) as a cofactor. The cofactor is Mg(2+).

Functionally, metal-dependent exopeptidase. This chain is Aminopeptidase T, found in Thermus thermophilus (strain ATCC 27634 / DSM 579 / HB8).